A 68-amino-acid polypeptide reads, in one-letter code: uncharacterized protein (68 aa).

The chain crosses the membrane as a helical span at residues 24–44 (AHICKCIAMFFVVAGVVLMFF).

The protein localises to the endoplasmic reticulum. It is found in the membrane. This is an uncharacterized protein from Saccharomyces cerevisiae (strain ATCC 204508 / S288c) (Baker's yeast).